Consider the following 251-residue polypeptide: Probable transcriptional regulatory protein Caul_0780 (251 aa).

The protein belongs to the TACO1 family.

It is found in the cytoplasm. The sequence is that of Probable transcriptional regulatory protein Caul_0780 from Caulobacter sp. (strain K31).